The primary structure comprises 663 residues: Alpha-amylase MalA (663 aa).

Disordered stretches follow at residues 1 to 28 (MHHP…PTAT) and 80 to 135 (GTLE…LTLR). A compositionally biased stretch (gly residues) spans 92–111 (RSGGHSGGVSGGRSGPGRSG). Catalysis depends on Asp-411, which acts as the Nucleophile. Residue Glu-440 is the Proton donor of the active site.

Belongs to the glycosyl hydrolase 13 family.

The protein resides in the cytoplasm. It carries out the reaction Endohydrolysis of (1-&gt;4)-alpha-D-glucosidic linkages in polysaccharides containing three or more (1-&gt;4)-alpha-linked D-glucose units.. Its pathway is glycan degradation; starch degradation. With respect to regulation, stable and active over a broad range of NaCl concentrations (0.5 to 4.2 M NaCl), with maximal activity at 2.6 M NaCl. 83% and 94% of the maximum activity at 0.6 and 4.2 M NaCl, respectively. Active and stable also in KCl. In terms of biological role, alpha-amylase that cleaves starch into oligosaccharides, the first step in starch degradation. Endo-acting enzyme which prefers a linear polysaccharide to branched polysaccharides hydrolyzing alpha-1,4 glucosidic bonds efficiently. Also has transglycosylation activity, but does not act on alpha-1,6 bonds. Higher activities of 100%, 79% and 67.8% against amylose, soluble starch and amylopectin, respectively. Lower activity of 22% against glycogen and faint or no activity against alpha-, beta- and gamma-cyclodextrin. The sequence is that of Alpha-amylase MalA from Haloarcula japonica (strain ATCC 49778 / DSM 6131 / JCM 7785 / NBRC 101032 / NCIMB 13157 / TR-1).